The following is a 293-amino-acid chain: Dehydrodolichyl diphosphate synthase complex subunit NUS1 (293 aa).

3 consecutive transmembrane segments (helical) span residues 1-23 (MTGL…RTLT), 35-56 (WIWR…GFTL), and 117-135 (IASL…ISVY). N-linked (GlcNAc...) asparagine glycosylation is found at asparagine 144 and asparagine 271. Residues 290–292 (RLG) carry the RXG motif; crucial for prenyltransferase activity motif. Positions 291 and 292 each coordinate isopentenyl diphosphate.

This sequence belongs to the UPP synthase family. In terms of assembly, the active dehydrodolichyl diphosphate synthase complex is a heterotetramer composed of a dimer of heterodimer of DHDDS and NUS1. Interacts with NPC2. Mg(2+) is required as a cofactor.

The protein localises to the endoplasmic reticulum membrane. It catalyses the reaction n isopentenyl diphosphate + (2E,6E)-farnesyl diphosphate = a di-trans,poly-cis-polyprenyl diphosphate + n diphosphate. Its pathway is protein modification; protein glycosylation. The protein operates within lipid metabolism. With respect to regulation, activated by phospholipids including cardiolipin, phosphatidylcholine, phosphatidylethanolamine, phosphatidylinositol and phosphatidylserine. In terms of biological role, with DHDDS, forms the dehydrodolichyl diphosphate synthase (DDS) complex, an essential component of the dolichol monophosphate (Dol-P) biosynthetic machinery. Both subunits contribute to enzymatic activity, i.e. condensation of multiple copies of isopentenyl pyrophosphate (IPP) to farnesyl pyrophosphate (FPP) to produce dehydrodolichyl diphosphate (Dedol-PP), a precursor of dolichol phosphate which is utilized as a sugar carrier in protein glycosylation in the endoplasmic reticulum (ER). Synthesizes long-chain polyprenols, mostly of C95 and C100 chain length. Regulates the glycosylation and stability of nascent NPC2, thereby promoting trafficking of LDL-derived cholesterol. Acts as a specific receptor for the N-terminus of Nogo-B, a neural and cardiovascular regulator. The protein is Dehydrodolichyl diphosphate synthase complex subunit NUS1 of Homo sapiens (Human).